We begin with the raw amino-acid sequence, 101 residues long: Large ribosomal subunit protein eL31 (101 aa).

The protein belongs to the eukaryotic ribosomal protein eL31 family.

The protein is Large ribosomal subunit protein eL31 of Ignicoccus hospitalis (strain KIN4/I / DSM 18386 / JCM 14125).